We begin with the raw amino-acid sequence, 152 residues long: Deoxyuridine 5'-triphosphate nucleotidohydrolase (152 aa).

Residues 72–74 (RSG), Asn85, and 89–91 (TID) contribute to the substrate site.

It belongs to the dUTPase family. Requires Mg(2+) as cofactor.

The enzyme catalyses dUTP + H2O = dUMP + diphosphate + H(+). It participates in pyrimidine metabolism; dUMP biosynthesis; dUMP from dCTP (dUTP route): step 2/2. Its function is as follows. This enzyme is involved in nucleotide metabolism: it produces dUMP, the immediate precursor of thymidine nucleotides and it decreases the intracellular concentration of dUTP so that uracil cannot be incorporated into DNA. This is Deoxyuridine 5'-triphosphate nucleotidohydrolase from Rhodopseudomonas palustris (strain BisB5).